The following is a 169-amino-acid chain: Group 2 truncated hemoglobin 3-2 (169 aa).

Residue H99 coordinates heme b.

Belongs to the truncated hemoglobin family. Group II subfamily. In terms of assembly, homodimer when ferric.

Functionally, hemoglobin-like protein that exhibits an unusual concentration-independent binding of O(2) and CO. Required for general plant development and during nodulation. May promote shoot organogenesis from root explants. The polypeptide is Group 2 truncated hemoglobin 3-2 (Medicago truncatula (Barrel medic)).